Consider the following 95-residue polypeptide: Large ribosomal subunit protein bL25 (95 aa).

This sequence belongs to the bacterial ribosomal protein bL25 family. In terms of assembly, part of the 50S ribosomal subunit; part of the 5S rRNA/L5/L18/L25 subcomplex. Contacts the 5S rRNA. Binds to the 5S rRNA independently of L5 and L18.

In terms of biological role, this is one of the proteins that binds to the 5S RNA in the ribosome where it forms part of the central protuberance. The chain is Large ribosomal subunit protein bL25 from Shewanella sp. (strain ANA-3).